The sequence spans 158 residues: MPKVAVIMGSKNDWEYMREAVEILKQFGIDYEARVVSAHRTPEFMMQYAKEAEKRGIEVIIAGAGGAAHLPGMVASLTSLPVIGVPIPSKNLNGLDSLLSIVQMPYGVPVATVAIGGAKNAALLAIRILGIKYKELADKIKKFSEDMRNDVLSTRLEA.

Positions 10, 13, and 40 each coordinate substrate.

It belongs to the AIR carboxylase family. Class I subfamily.

It carries out the reaction 5-carboxyamino-1-(5-phospho-D-ribosyl)imidazole + H(+) = 5-amino-1-(5-phospho-D-ribosyl)imidazole-4-carboxylate. It participates in purine metabolism; IMP biosynthesis via de novo pathway; 5-amino-1-(5-phospho-D-ribosyl)imidazole-4-carboxylate from 5-amino-1-(5-phospho-D-ribosyl)imidazole (N5-CAIR route): step 2/2. In terms of biological role, catalyzes the conversion of N5-carboxyaminoimidazole ribonucleotide (N5-CAIR) to 4-carboxy-5-aminoimidazole ribonucleotide (CAIR). The protein is N5-carboxyaminoimidazole ribonucleotide mutase of Saccharolobus solfataricus (strain ATCC 35092 / DSM 1617 / JCM 11322 / P2) (Sulfolobus solfataricus).